The chain runs to 231 residues: MTGAATAAENSATQLEFYRKALNFNVIGRYDPKIKQLLFHTPHASLYKWDFKKDEWNKLEYQGVLAIYLRDVSQNTNLLPVSPQEVDIFDSQNGSNNIQVNNGSDNSNRNSSGNGNSYKSNDSLTYNCGKTLSGKDIYNYGLIILNRINPDNFSMGIVPNSVVNKRKVFNAEEDTLNPLECMGVEVKDELVIIKNLKHEVYGIWIHTVSDRQNIYELIKYLLENEPKDSFA.

The segment at 92–120 is disordered; sequence QNGSNNIQVNNGSDNSNRNSSGNGNSYKS. The segment covering 101–120 has biased composition (low complexity); it reads NNGSDNSNRNSSGNGNSYKS.

The protein belongs to the DCP1 family. As to quaternary structure, component of the decapping complex composed of DCP1 and DCP2. Interacts with mRNAs, DHH1, LSM1, LSM2, LSM3, LSM4, LSM5, LSM6, LSM7, and the cap-binding proteins PAB1 and TIF4632/eIF-4G. Phosphorylated.

The protein localises to the cytoplasm. The protein resides in the P-body. In terms of biological role, component of the decapping complex necessary for the degradation of mRNAs, both in normal mRNA turnover and in nonsense-mediated mRNA decay. Removes the 7-methyl guanine cap structure from mRNA molecules, yielding a 5'-phosphorylated mRNA fragment and 7m-GDP. Decapping is the major pathway of mRNA degradation in yeast. It occurs through deadenylation, decapping and subsequent 5' to 3' exonucleolytic decay of the transcript body. DCP1 is activated by the DEAD-box helicase DHH1 and destabilizes the eIF-4F cap-binding complex from the mRNA. This is mRNA-decapping enzyme subunit 1 (DCP1) from Saccharomyces cerevisiae (strain ATCC 204508 / S288c) (Baker's yeast).